A 143-amino-acid chain; its full sequence is Large ribosomal subunit protein uL11 (143 aa).

This sequence belongs to the universal ribosomal protein uL11 family. Part of the ribosomal stalk of the 50S ribosomal subunit. Interacts with L10 and the large rRNA to form the base of the stalk. L10 forms an elongated spine to which L12 dimers bind in a sequential fashion forming a multimeric L10(L12)X complex. One or more lysine residues are methylated.

Forms part of the ribosomal stalk which helps the ribosome interact with GTP-bound translation factors. This Clavibacter sepedonicus (Clavibacter michiganensis subsp. sepedonicus) protein is Large ribosomal subunit protein uL11.